We begin with the raw amino-acid sequence, 305 residues long: Fe-S cluster assembly protein dre2 (305 aa).

The segment at 21 to 150 (DATQKRTLLL…EKPQYQEAAV (130 aa)) is N-terminal SAM-like domain. The tract at residues 151–195 (PLRFGLKKKNKVAPEPVKVESVGFVDNYDDDELIDEDDLLAEEDL) is linker. The [2Fe-2S] cluster site is built by Cys-205, Cys-217, Cys-220, and Cys-222. The segment at 205 to 222 (CKPDIAKKRRRACKDCTC) is fe-S binding site A. [4Fe-4S] cluster-binding residues include Cys-268, Cys-271, Cys-279, and Cys-282. Short sequence motifs (cx2C motif) lie at residues 268-271 (CNSC) and 279-282 (CEGC). The segment at 268–282 (CNSCSLGDAFRCEGC) is fe-S binding site B.

This sequence belongs to the anamorsin family. As to quaternary structure, monomer. Interacts with tah18. Interacts with mia40. [2Fe-2S] cluster is required as a cofactor. Requires [4Fe-4S] cluster as cofactor.

It is found in the cytoplasm. Its subcellular location is the mitochondrion intermembrane space. In terms of biological role, component of the cytosolic iron-sulfur (Fe-S) protein assembly (CIA) machinery required for the maturation of extramitochondrial Fe-S proteins. Part of an electron transfer chain functioning in an early step of cytosolic Fe-S biogenesis, facilitating the de novo assembly of a [4Fe-4S] cluster on the scaffold complex cfd1-nbp35. Electrons are transferred to dre2 from NADPH via the FAD- and FMN-containing protein tah18. Tah18-dre2 are also required for the assembly of the diferric tyrosyl radical cofactor of ribonucleotide reductase (RNR), probably by providing electrons for reduction during radical cofactor maturation in the catalytic small subunit rnr2. The chain is Fe-S cluster assembly protein dre2 from Talaromyces marneffei (strain ATCC 18224 / CBS 334.59 / QM 7333) (Penicillium marneffei).